We begin with the raw amino-acid sequence, 448 residues long: D-inositol 3-phosphate glycosyltransferase (448 aa).

Positions 1-21 are disordered; it reads MAEQHTGVGRQRGARPWPRPR. His29 is a 1D-myo-inositol 3-phosphate binding site. UDP-N-acetyl-alpha-D-glucosamine-binding positions include 35–36 and Gly43; that span reads QP. 1D-myo-inositol 3-phosphate contacts are provided by residues 40–45, Lys98, Tyr131, Thr155, and Arg175; that span reads DAGGMN. UDP-N-acetyl-alpha-D-glucosamine contacts are provided by Arg255, Lys260, and Gln321. The Mg(2+) site is built by Tyr330, Arg331, and Ala333. Residues Glu343 and Glu351 each contribute to the UDP-N-acetyl-alpha-D-glucosamine site. Thr357 provides a ligand contact to Mg(2+).

This sequence belongs to the glycosyltransferase group 1 family. MshA subfamily. Homodimer.

The enzyme catalyses 1D-myo-inositol 3-phosphate + UDP-N-acetyl-alpha-D-glucosamine = 1D-myo-inositol 2-acetamido-2-deoxy-alpha-D-glucopyranoside 3-phosphate + UDP + H(+). Functionally, catalyzes the transfer of a N-acetyl-glucosamine moiety to 1D-myo-inositol 3-phosphate to produce 1D-myo-inositol 2-acetamido-2-deoxy-glucopyranoside 3-phosphate in the mycothiol biosynthesis pathway. The sequence is that of D-inositol 3-phosphate glycosyltransferase from Salinispora arenicola (strain CNS-205).